A 187-amino-acid chain; its full sequence is GTP cyclohydrolase 1 (187 aa).

Residues Cys-76, His-79, and Cys-148 each coordinate Zn(2+).

Belongs to the GTP cyclohydrolase I family. In terms of assembly, toroid-shaped homodecamer, composed of two pentamers of five dimers.

It carries out the reaction GTP + H2O = 7,8-dihydroneopterin 3'-triphosphate + formate + H(+). Its pathway is cofactor biosynthesis; 7,8-dihydroneopterin triphosphate biosynthesis; 7,8-dihydroneopterin triphosphate from GTP: step 1/1. The sequence is that of GTP cyclohydrolase 1 from Acetivibrio thermocellus (strain ATCC 27405 / DSM 1237 / JCM 9322 / NBRC 103400 / NCIMB 10682 / NRRL B-4536 / VPI 7372) (Clostridium thermocellum).